A 463-amino-acid chain; its full sequence is MTTESNAYRGLAWVAAMALFMQSLDATILNTALPAISSDLHKPAFEMQMAIIAYSLAVALFIPLTAWAAAKFGTLTVFRSAVFTFILGSVACAAASNLESLILARVIQGIGGAFMMPVARLAIIQAVPKQQLVNAWNLMATAGLIGPILGPILGGWLVIHASWHWIFLINIPIGALGILASGSVMNNIKGKAEKLDWTGFLLFALGLVGITLGLDLLGESQHNSSVTYSILVVGILLLVTYCGYAKNNENAILPLSLFRTRTFRLGIIANIFIRLSASGVPFLLPLMFQLSFGYSAEMSGWLLAPIALISVMLKILIGRILNRWGYKTTLISSALLMAGSVISMAWLDKQSSLTWIICNLMWYGACMSIIFTSINTLAVGDLSKQQSGTGSTVLSIVQQVGIGFGIAVSSIILNLYRHFFSASDCLPQAFSYTFLTSSLFVIALVWSLMKLHKHDGDHLRKMP.

Helical transmembrane passes span 10–30, 49–69, 82–102, 107–127, 139–159, 165–185, 197–217, 225–245, 267–287, 298–318, 328–348, 354–374, 393–413, and 429–449; these read GLAW…TILN, MAII…AWAA, VFTF…ESLI, IQGI…IQAV, MATA…WLVI, WIFL…GSVM, WTGF…LDLL, SVTY…CGYA, IIAN…LPLM, MSGW…ILIG, TTLI…AWLD, TWII…FTSI, VLSI…SIIL, and AFSY…WSLM.

It belongs to the major facilitator superfamily. EmrB family.

It localises to the cell inner membrane. The sequence is that of Probable transport protein HsrA (hsrA) from Haemophilus influenzae (strain ATCC 51907 / DSM 11121 / KW20 / Rd).